Reading from the N-terminus, the 454-residue chain is Lamina-associated polypeptide 2, isoforms beta/gamma (454 aa).

Positions 1-410 (MPEFLEDPSV…KSEKTKKGRS (410 aa)) are nucleoplasmic. The LEM-like domain occupies 5–48 (LEDPSVLTKDKLKSELVANNVTLPAGEQRKDVYVQLYLQHLTAR). Disordered stretches follow at residues 47–117 (ARNR…ELTN) and 149–265 (LREQ…VETS). The segment at 49 to 108 (NRPPLPAGTNSKGPPDFSSDEEREPTPVLGSGAAAAGRSRAAVGRKATKKTDKPRQEDKD) is linker. Position 57 is a phosphothreonine (threonine 57). 3 positions are modified to phosphoserine: serine 59, serine 66, and serine 67. At threonine 74 the chain carries Phosphothreonine. Positions 78-93 (GSGAAAAGRSRAAVGR) are enriched in low complexity. Residue serine 79 is modified to Phosphoserine. Residues arginine 86 and arginine 88 each carry the omega-N-methylarginine modification. Basic and acidic residues predominate over residues 97–106 (KKTDKPRQED). Residues 107–117 (KDDLDVTELTN) show a composition bias toward acidic residues. The 45-residue stretch at 109–153 (DLDVTELTNEDLLDQLVKYGVNPGPIVGTTRKLYEKKLLKLREQG) folds into the LEM domain. The tract at residues 138–243 (TRKLYEKKLL…TSGSSKGGPL (106 aa)) is NAKAP95-binding N. Threonine 154 carries the phosphothreonine modification. The segment covering 155–178 (ESRSSTPLPTISSSAENTRQNGSN) has biased composition (polar residues). Residues serine 156 and serine 159 each carry the phosphoserine modification. Phosphothreonine occurs at positions 160 and 164. Phosphoserine is present on residues serine 166, serine 168, serine 177, serine 180, serine 184, and serine 190. Residues 179 to 203 (DSDRYSDNEEDSKIELKLEKREPLK) show a composition bias toward basic and acidic residues. An N6-acetyllysine modification is found at lysine 207. Position 211 is a phosphothreonine (threonine 211). Positions 220 to 237 (NQSYSQAGITETEWTSGS) are enriched in polar residues. Serine 222, serine 224, serine 250, serine 254, serine 265, serine 292, and serine 306 each carry phosphoserine. Residues 299-371 (TGNFKHASPI…SCRRPIKGAA (73 aa)) are binds lamins B. Positions 300 to 374 (GNFKHASPIL…RPIKGAAGRP (75 aa)) are NAKAP95-binding C. Threonine 312 carries the phosphothreonine modification. Residue serine 315 is modified to Phosphoserine. Arginine 320 is modified (citrulline). Phosphoserine is present on residues serine 362, serine 378, and serine 385. N6-acetyllysine is present on lysine 389. Lysine 401 participates in a covalent cross-link: Glycyl lysine isopeptide (Lys-Gly) (interchain with G-Cter in SUMO2). Serine 402 is modified (phosphoserine). A helical; Signal-anchor for type II membrane protein transmembrane segment spans residues 411 to 434 (IPVWIKILLFVVVAVFLFLVYQAM). At 435 to 454 (ETNQVNPFSNFLHVDPRKSN) the chain is on the lumenal side.

This sequence belongs to the LEM family. Interacts with LMNB1, LMNB2, BANF1, AKAP8L, GMCL and chromosomes. Isoform Zeta interacts with BANF1/BAF and may sequester it in the cytoplasm. Post-translationally, mitosis-specific phosphorylation specifically abolishes its binding to lamin B and chromosomes. In terms of processing, citrullinated by PADI4. As to expression, expressed in many tissues. Most abundant in adult thymus and fetal liver.

It localises to the nucleus inner membrane. The protein localises to the cytoplasm. Its function is as follows. May help direct the assembly of the nuclear lamina and thereby help maintain the structural organization of the nuclear envelope. Possible receptor for attachment of lamin filaments to the inner nuclear membrane. May be involved in the control of initiation of DNA replication through its interaction with NAKAP95. Functionally, thymopoietin (TP) and Thymopentin (TP5) may play a role in T-cell development and function. TP5 is an immunomodulating pentapeptide. This Homo sapiens (Human) protein is Lamina-associated polypeptide 2, isoforms beta/gamma (TMPO).